The sequence spans 486 residues: Cardiolipin synthase A (486 aa).

2 consecutive transmembrane segments (helical) span residues 3–23 (IFYN…IANI) and 38–58 (MSWL…WFFF). PLD phosphodiesterase domains are found at residues 219-246 (VDVR…VDPY) and 399-426 (QKGL…DMRS). Active-site residues include H224, K226, D231, H404, K406, and D411.

This sequence belongs to the phospholipase D family. Cardiolipin synthase subfamily. ClsA sub-subfamily.

The protein localises to the cell inner membrane. It catalyses the reaction 2 a 1,2-diacyl-sn-glycero-3-phospho-(1'-sn-glycerol) = a cardiolipin + glycerol. Its function is as follows. Catalyzes the reversible phosphatidyl group transfer from one phosphatidylglycerol molecule to another to form cardiolipin (CL) (diphosphatidylglycerol) and glycerol. This chain is Cardiolipin synthase A, found in Buchnera aphidicola subsp. Acyrthosiphon pisum (strain APS) (Acyrthosiphon pisum symbiotic bacterium).